The sequence spans 367 residues: Aminomethyltransferase (367 aa).

The protein belongs to the GcvT family. In terms of assembly, the glycine cleavage system is composed of four proteins: P, T, L and H.

The catalysed reaction is N(6)-[(R)-S(8)-aminomethyldihydrolipoyl]-L-lysyl-[protein] + (6S)-5,6,7,8-tetrahydrofolate = N(6)-[(R)-dihydrolipoyl]-L-lysyl-[protein] + (6R)-5,10-methylene-5,6,7,8-tetrahydrofolate + NH4(+). Functionally, the glycine cleavage system catalyzes the degradation of glycine. The protein is Aminomethyltransferase of Mycobacterium leprae (strain Br4923).